The chain runs to 229 residues: uncharacterized protein (229 aa).

This is an uncharacterized protein from Mus musculus (Mouse).